Reading from the N-terminus, the 398-residue chain is DNA replication and repair protein RecF (398 aa).

30-37 (GRNGFGKT) lines the ATP pocket.

This sequence belongs to the RecF family.

The protein localises to the cytoplasm. Its function is as follows. The RecF protein is involved in DNA metabolism; it is required for DNA replication and normal SOS inducibility. RecF binds preferentially to single-stranded, linear DNA. It also seems to bind ATP. The chain is DNA replication and repair protein RecF from Corynebacterium efficiens (strain DSM 44549 / YS-314 / AJ 12310 / JCM 11189 / NBRC 100395).